A 423-amino-acid chain; its full sequence is Growth hormone-releasing hormone receptor (423 aa).

The first 22 residues, Met-1–Gly-22, serve as a signal peptide directing secretion. The Extracellular segment spans residues His-23–Arg-130. 3 disulfides stabilise this stretch: Cys-41/Cys-64, Cys-55/Cys-96, and Cys-78/Cys-112. Asn-50 carries N-linked (GlcNAc...) asparagine glycosylation. A helical transmembrane segment spans residues Ile-131–Leu-151. The Cytoplasmic portion of the chain corresponds to Val-152–Gln-167. The chain crosses the membrane as a helical span at residues Leu-168 to His-188. The Extracellular segment spans residues Ser-189–His-210. Residues Phe-211–Leu-231 traverse the membrane as a helical segment. Residues Ala-232–Arg-240 lie on the Cytoplasmic side of the membrane. Residues Ala-241–Val-261 traverse the membrane as a helical segment. Over Gly-262 to Trp-283 the chain is Extracellular. A helical membrane pass occupies residues Ile-284–Ile-304. Topologically, residues Arg-305–Thr-331 are cytoplasmic. A helical transmembrane segment spans residues Leu-332–Ala-352. Residues Gly-353–Arg-357 lie on the Extracellular side of the membrane. The helical transmembrane segment at Leu-358–Phe-378 threads the bilayer. Topologically, residues Leu-379–Cys-423 are cytoplasmic.

Belongs to the G-protein coupled receptor 2 family. In terms of tissue distribution, pituitary gland. Also detected in the lymphocytes and thymocytes.

It localises to the cell membrane. Receptor for GRF, coupled to G proteins which activate adenylyl cyclase. Stimulates somatotroph cell growth, growth hormone gene transcription and growth hormone secretion. In Sus scrofa (Pig), this protein is Growth hormone-releasing hormone receptor (GHRHR).